The primary structure comprises 285 residues: Formate channel FocA (285 aa).

Topologically, residues 1 to 30 are cytoplasmic; that stretch reads MKADNPFDLLLPAAMAKVAEEAGVYKATKH. Residues 31–56 traverse the membrane as a helical segment; it reads PLKTFYLAITAGVFISIAFVFYITAT. The Periplasmic segment spans residues 57–64; the sequence is TGTGTMPF. A helical transmembrane segment spans residues 65 to 85; that stretch reads GMAKLVGGICFSLGLILCVVC. At 86–112 the chain is on the cytoplasmic side; that stretch reads GADLFTSTVLIVVAKASGRITWGQLAK. The chain crosses the membrane as a helical span at residues 113–135; sequence NWLNVYFGNLVGALLFVLLMWLS. The Periplasmic portion of the chain corresponds to 136-160; the sequence is GEYMTANGQWGLNVLQTADHKVHHT. Residues 161-181 traverse the membrane as a helical segment; sequence FIEAVCLGILANLMVCLAVWM. Residues 182-187 are Cytoplasmic-facing; the sequence is SYSGRS. The helical transmembrane segment at 188 to 205 threads the bilayer; sequence LMDKAFIMVLPVAMFVAS. Residues 206–249 lie on the Periplasmic side of the membrane; sequence GFEHSIANMFMIPMGIVIRDFASPEFWTAVGSAPENFSHLTVMN. The chain crosses the membrane as a helical span at residues 250 to 276; the sequence is FITDNLIPVTIGNIIGGGLLVGLTYWV. Residues 277–285 are Cytoplasmic-facing; it reads IYLRENDHH.

The protein belongs to the FNT transporter (TC 1.A.16) family. As to quaternary structure, homopentamer.

It is found in the cell inner membrane. The catalysed reaction is formate(in) = formate(out). Involved in the bidirectional transport of formate during mixed-acid fermentation. Functions to maintain relatively constant intracellular formate levels during growth, using different mechanisms for efflux and uptake of the anion. Is impermeable to water. The sequence is that of Formate channel FocA from Escherichia coli O157:H7.